The following is a 111-amino-acid chain: uncharacterized protein (111 aa).

This is an uncharacterized protein from Methanocaldococcus jannaschii (strain ATCC 43067 / DSM 2661 / JAL-1 / JCM 10045 / NBRC 100440) (Methanococcus jannaschii).